Consider the following 193-residue polypeptide: Ion-translocating oxidoreductase complex subunit B (193 aa).

Residues 1–26 (MSTMLIAVILLTLLALFFGVLLGFAA) are hydrophobic. The region spanning 32–90 (EGNPIVDELEAILPQTQCGQCGYPGCRPYAEAIANGDKVNKCPPGGTATMEKLANLMGV) is the 4Fe-4S domain. Cysteine 49, cysteine 52, cysteine 57, cysteine 73, cysteine 114, cysteine 117, cysteine 120, cysteine 124, cysteine 144, cysteine 147, cysteine 150, and cysteine 154 together coordinate [4Fe-4S] cluster. 2 4Fe-4S ferredoxin-type domains span residues 105-134 (KVAY…GAGK) and 136-164 (MHTV…MIPV).

Belongs to the 4Fe4S bacterial-type ferredoxin family. RnfB subfamily. As to quaternary structure, the complex is composed of six subunits: RnfA, RnfB, RnfC, RnfD, RnfE and RnfG. [4Fe-4S] cluster is required as a cofactor.

The protein resides in the cell inner membrane. Its function is as follows. Part of a membrane-bound complex that couples electron transfer with translocation of ions across the membrane. This Shewanella sp. (strain ANA-3) protein is Ion-translocating oxidoreductase complex subunit B.